Here is a 395-residue protein sequence, read N- to C-terminus: Argininosuccinate synthase (395 aa).

Residues 10–18 (AYSGGLDTS) and Ala-37 each bind ATP. Residues Tyr-88 and Ser-93 each coordinate L-citrulline. Gly-118 contacts ATP. Residues Thr-120, Asn-124, and Asp-125 each contribute to the L-aspartate site. Asn-124 contributes to the L-citrulline binding site. Residues Arg-128, Ser-179, Ser-188, Glu-264, and Tyr-276 each contribute to the L-citrulline site.

Belongs to the argininosuccinate synthase family. Type 1 subfamily. As to quaternary structure, homotetramer.

It localises to the cytoplasm. It catalyses the reaction L-citrulline + L-aspartate + ATP = 2-(N(omega)-L-arginino)succinate + AMP + diphosphate + H(+). Its pathway is amino-acid biosynthesis; L-arginine biosynthesis; L-arginine from L-ornithine and carbamoyl phosphate: step 2/3. The protein is Argininosuccinate synthase of Pelagibacter ubique (strain HTCC1062).